The sequence spans 361 residues: Eukaryotic translation initiation factor 3 subunit F (361 aa).

Low complexity-rich tracts occupy residues 1–32 and 42–73; these read MASPAVPANVPPATAAAAPAPVVTAAPASAPT and ATPAASPAPVSSDPAVAAPAAPGQTPASAPAP. A disordered region spans residues 1-91; it reads MASPAVPANV…PGPALPGPFP (91 aa). At Ala2 the chain carries N-acetylalanine. Phosphoserine; by CDK11; in vitro is present on Ser52. The segment covering 74-90 has biased composition (pro residues); it reads AQTPAPSQPGPALPGPF. Residues 96-226 enclose the MPN domain; the sequence is VRLHPVILAS…IKAYVSTLMG (131 aa). Lys242 is subject to N6-acetyllysine. The residue at position 262 (Ser262) is a Phosphoserine.

It belongs to the eIF-3 subunit F family. Component of the eukaryotic translation initiation factor 3 (eIF-3) complex, which is composed of 13 subunits: EIF3A, EIF3B, EIF3C, EIF3D, EIF3E, EIF3F, EIF3G, EIF3H, EIF3I, EIF3J, EIF3K, EIF3L and EIF3M. The eIF-3 complex appears to include 3 stable modules: module A is composed of EIF3A, EIF3B, EIF3G and EIF3I; module B is composed of EIF3F, EIF3H, and EIF3M; and module C is composed of EIF3C, EIF3D, EIF3E, EIF3K and EIF3L. EIF3C of module C binds EIF3B of module A and EIF3H of module B, thereby linking the three modules. EIF3J is a labile subunit that binds to the eIF-3 complex via EIF3B. The eIF-3 complex may interact with RPS6KB1 under conditions of nutrient depletion. Mitogenic stimulation may lead to binding and activation of a complex composed of MTOR and RPTOR, leading to phosphorylation and release of RPS6KB1 and binding of EIF4B to eIF-3. Interacts with RNF139; the interaction leads to protein translation inhibitions in a ubiquitination-dependent manner. Interacts with DTX1, the interaction is required for deubiquitinating activity towards NOTCH1. Phosphorylation is enhanced upon serum stimulation. Phosphorylated during apoptosis by caspase-processed CDK11.

Its subcellular location is the cytoplasm. The catalysed reaction is Thiol-dependent hydrolysis of ester, thioester, amide, peptide and isopeptide bonds formed by the C-terminal Gly of ubiquitin (a 76-residue protein attached to proteins as an intracellular targeting signal).. In terms of biological role, component of the eukaryotic translation initiation factor 3 (eIF-3) complex, which is required for several steps in the initiation of protein synthesis. The eIF-3 complex associates with the 40S ribosome and facilitates the recruitment of eIF-1, eIF-1A, eIF-2:GTP:methionyl-tRNAi and eIF-5 to form the 43S pre-initiation complex (43S PIC). The eIF-3 complex stimulates mRNA recruitment to the 43S PIC and scanning of the mRNA for AUG recognition. The eIF-3 complex is also required for disassembly and recycling of post-termination ribosomal complexes and subsequently prevents premature joining of the 40S and 60S ribosomal subunits prior to initiation. The eIF-3 complex specifically targets and initiates translation of a subset of mRNAs involved in cell proliferation, including cell cycling, differentiation and apoptosis, and uses different modes of RNA stem-loop binding to exert either translational activation or repression. Its function is as follows. Deubiquitinates activated NOTCH1, promoting its nuclear import, thereby acting as a positive regulator of Notch signaling. The protein is Eukaryotic translation initiation factor 3 subunit F (Eif3f) of Mus musculus (Mouse).